A 58-amino-acid polypeptide reads, in one-letter code: ADVPGNYPLDKDGNTYTCLELGENKDCQKVCKLHGVQYGYCYAFSCWCKEYLDDKDSV.

An LCN-type CS-alpha/beta domain is found at 3–58 (VPGNYPLDKDGNTYTCLELGENKDCQKVCKLHGVQYGYCYAFSCWCKEYLDDKDSV). Cystine bridges form between C18–C41, C27–C46, and C31–C48.

As to expression, expressed by the venom gland.

It is found in the secreted. Its function is as follows. Beta toxins bind voltage-independently at site-4 of sodium channels (Nav) and shift the voltage of activation toward more negative potentials thereby affecting sodium channel activation and promoting spontaneous and repetitive firing. In mice, causes intense writhing. This Parabuthus transvaalicus (Transvaal thick-tailed scorpion) protein is Bestoxin.